The sequence spans 50 residues: U37-theraphotoxin-Cg1b (50 aa).

The signal sequence occupies residues 1-19 (MRVLLIIAGLALLSVVCYT).

It belongs to the neurotoxin 10 (Hwtx-1) family. 67 (Jztx-67) subfamily. In terms of tissue distribution, expressed by the venom gland.

It is found in the secreted. The chain is U37-theraphotoxin-Cg1b from Chilobrachys guangxiensis (Chinese earth tiger tarantula).